A 357-amino-acid polypeptide reads, in one-letter code: Dihydroorotate dehydrogenase (quinone) (357 aa).

FMN contacts are provided by residues 66–70 (AGFDK) and T90. K70 is a binding site for substrate. 115-119 (NRMGF) lines the substrate pocket. Positions 143 and 176 each coordinate FMN. N176 provides a ligand contact to substrate. S179 functions as the Nucleophile in the catalytic mechanism. N181 contacts substrate. FMN is bound by residues K212 and T240. 241–242 (NT) lines the substrate pocket. Residues G264, G293, and 314-315 (YT) each bind FMN.

The protein belongs to the dihydroorotate dehydrogenase family. Type 2 subfamily. Monomer. FMN serves as cofactor.

The protein resides in the cell membrane. It carries out the reaction (S)-dihydroorotate + a quinone = orotate + a quinol. It functions in the pathway pyrimidine metabolism; UMP biosynthesis via de novo pathway; orotate from (S)-dihydroorotate (quinone route): step 1/1. Its function is as follows. Catalyzes the conversion of dihydroorotate to orotate with quinone as electron acceptor. This chain is Dihydroorotate dehydrogenase (quinone), found in Mycobacterium bovis (strain BCG / Pasteur 1173P2).